The primary structure comprises 1041 residues: Nuclear pore complex protein NUP98A (1041 aa).

Positions Met1–Pro34 are enriched in polar residues. The disordered stretch occupies residues Met1–Ser44. 44 repeat units span residues Phe2–Gly3, Phe8–Gly9, Phe17–Gly18, Phe23–Gly24, Phe41–Gly42, Phe56–Gly57, Phe64–Gly65, Phe79–Gly80, Phe87–Gly88, Phe94–Gly95, Phe103–Gly104, Phe109–Gly110, Phe124–Gly125, Phe135–Gly136, Phe140–Gly141, Phe146–Gly147, Phe154–Gly155, Phe162–Gly163, Phe170–Gly171, Phe178–Gly179, Phe186–Gly187, Phe194–Gly195, Phe202–Gly203, Phe210–Gly211, Phe217–Gly218, Phe222–Gly223, Phe228–Gly229, Phe236–Gly237, Phe244–Gly245, Phe252–Gly253, Phe260–Gly261, Phe268–Gly269, Phe276–Gly277, Phe284–Gly285, Phe294–Gly295, Phe300–Gly301, Phe307–Gly308, Phe312–Gly313, Phe319–Gly320, Phe329–Gly330, Phe334–Gly335, Phe339–Gly340, Phe411–Gly412, and Phe427–Gly428. Residues Phe2–Gly677 form a 65 X 2 AA repeats of F-G region. The tract at residues Pro98–Gly171 is disordered. Polar residues predominate over residues Ser117–Gly171. 2 disordered regions span residues Thr315–Arg347 and Gln392–Phe447. Residues Thr430–Phe447 show a composition bias toward low complexity. Tandem repeats lie at residues Phe459–Gly460, Phe466–Gly467, Phe471–Gly472, Phe480–Gly481, Phe491–Gly492, Phe497–Gly498, Phe506–Gly507, Phe514–Gly515, Phe521–Gly522, Phe533–Gly534, Phe555–Gly556, Phe562–Gly563, Phe565–Gly566, Phe573–Gly574, Phe586–Gly587, Phe604–Gly605, Phe627–Gly628, Phe632–Gly633, Phe650–Gly651, Phe655–Gly656, and Phe676–Gly677. Residues Ser517 to Gly526 are compositionally biased toward low complexity. The tract at residues Ser517–Ser560 is disordered. Polar residues predominate over residues Phe533 to Ser560. The interval Lys734–Gly860 is disordered. A compositionally biased stretch (basic and acidic residues) spans Ser782–Arg793. Polar residues predominate over residues Thr831–Asp846. The Peptidase S59 domain occupies Gln885 to Phe1027.

This sequence belongs to the nucleoporin GLFG family. In terms of assembly, part of the nuclear pore complex (NPC). The NPC has an eight-fold symmetrical structure comprising a central transport channel and two rings, the cytoplasmic and nuclear rings, to which eight filaments are attached. The cytoplasmic filaments have loose ends, while the nuclear filaments are joined in a distal ring, forming a nuclear basket. NPCs are highly dynamic in configuration and composition, and can be devided in 3 subcomplexes, the NUP62 subcomplex, the NUP107-160 subcomplex and the NUP93 subcomplex, containing approximately 30 different nucleoporin proteins.

Its subcellular location is the nucleus. The protein localises to the nuclear pore complex. The protein is Nuclear pore complex protein NUP98A of Arabidopsis thaliana (Mouse-ear cress).